The sequence spans 2111 residues: Fatty acid synthase beta subunit aflB (2111 aa).

The acetyltransferase (AT) domain stretch occupies residues 200-565 (IVTVFNGQGV…KAGTAARVIL (366 aa)). Residues 618–863 (SRALGLPPVM…AIVDTPGVPD (246 aa)) are enoyl reductase (ER) domain. The tract at residues 1195 to 1688 (GTKPSWRKAL…SPGETLLVDI (494 aa)) is dehydratase (DH) domain. Residues 1606-1708 (EMPTSSDQYA…IVVATARSES (103 aa)) form the MaoC-like domain. The tract at residues 1727 to 2091 (YLFTGQGSQK…FENVLAISES (365 aa)) is malonyl/palmitoyl transferase (MT/PT) domain.

This sequence belongs to the fungal fatty acid synthetase subunit beta family. In terms of assembly, [Alpha(6)beta(6)] hexamers of two multifunctional subunits (alpha and beta).

It catalyses the reaction acetyl-CoA + n malonyl-CoA + 2n NADPH + 4n H(+) = a long-chain-acyl-CoA + n CoA + n CO2 + 2n NADP(+).. The enzyme catalyses holo-[ACP] + acetyl-CoA = acetyl-[ACP] + CoA. The catalysed reaction is holo-[ACP] + malonyl-CoA = malonyl-[ACP] + CoA. It carries out the reaction a (3R)-hydroxyacyl-[ACP] = a (2E)-enoyl-[ACP] + H2O. It catalyses the reaction a 2,3-saturated acyl-[ACP] + NAD(+) = a (2E)-enoyl-[ACP] + NADH + H(+). The enzyme catalyses (9Z)-octadecenoyl-[ACP] + H2O = (9Z)-octadecenoate + holo-[ACP] + H(+). Its pathway is secondary metabolite biosynthesis. Functionally, fatty acid synthase beta subunit; part of the gene cluster that mediates the biosynthesis of aspercryptins, linear lipopeptides built from six amino acids including 2 highly unusual and nonproteogenic amino acids, 2-amino-octanoic acid (2aoa) and 2-amino-dodecanol (2adol). The core structure of aspercryptins is as follows: Ser/Ala-Thr-Ile/Val-2aoa-Asn-2adol. The first step of aspercryptin biosynthesis is the generation of the fatty acid precursors, octanoic and dodecanoic acids, by the FAS subunits atnF and atnM. The fatty acid precursors are likely transformed into the corresponding alpha-amino fatty acids in three steps. First, they are hydroxylated by the cytochrome P450 monooxygenase atnE, then oxidized to the corresponding alpha-keto acids by the NAD(P)-dependent oxidoreductase atnD, and finally converted to the alpha-amino fatty acids by the PLP-dependent aminotransferases atnH or atnJ. the alpha-amino fatty acids, 2-amino-octanoic and 2-amino-dodecanoic acids, are recognized, activated, and covalently tethered to the NRPS atnA by its fourth and sixth adenylation domains. The second module of atnA is the Thr module and contains an epimerase (E) domain responsible for the epimerization of Thr to D-allo-Thr. Additionally, despite atnA having only one epimerase domain, the first amino acid of aspercryptin A1 is D-Ser, suggesting that serine is either loaded directly as D-Ser on the first module or that the epimerase domain in the threonine module epimerizes both L-Ser and L-Thr. After condensation of the hexapeptide of aspercryptin, the C-terminal reductase (TE) domain might be involved in the reductive release and production of the aldehyde hexapeptide. Further reduction would generate aspercryptins. The variety of aspercryptins produced reflects the flexibility of the atnA NRPS, allowing incorporation of alanine instead of serine, valine for isoleucine, and a C10 fatty amino alcohol instead of the C12 version. AtnB seems to be involved in the selectivity for Ile versus Val by the third module. Moreover, type B, C and D aspercryptins have an additional N-terminal cichorine, acetyl and propionyl group respectively. In Emericella nidulans (strain FGSC A4 / ATCC 38163 / CBS 112.46 / NRRL 194 / M139) (Aspergillus nidulans), this protein is Fatty acid synthase beta subunit aflB.